A 357-amino-acid chain; its full sequence is Elongation factor Ts (357 aa).

The tract at residues 82–85 is involved in Mg(2+) ion dislocation from EF-Tu; the sequence is TDFV.

It belongs to the EF-Ts family.

The protein resides in the cytoplasm. In terms of biological role, associates with the EF-Tu.GDP complex and induces the exchange of GDP to GTP. It remains bound to the aminoacyl-tRNA.EF-Tu.GTP complex up to the GTP hydrolysis stage on the ribosome. In Campylobacter jejuni subsp. doylei (strain ATCC BAA-1458 / RM4099 / 269.97), this protein is Elongation factor Ts.